A 593-amino-acid polypeptide reads, in one-letter code: Arginine--tRNA ligase (593 aa).

The short motif at Ala138–His148 is the 'HIGH' region element.

It belongs to the class-I aminoacyl-tRNA synthetase family. In terms of assembly, monomer.

Its subcellular location is the cytoplasm. It catalyses the reaction tRNA(Arg) + L-arginine + ATP = L-arginyl-tRNA(Arg) + AMP + diphosphate. The sequence is that of Arginine--tRNA ligase from Burkholderia orbicola (strain MC0-3).